Here is a 547-residue protein sequence, read N- to C-terminus: CDK5RAP1-like protein (547 aa).

Positions 79–194 (RTVCYVTYGC…LPRLVAVAAG (116 aa)) constitute an MTTase N-terminal domain. [4Fe-4S] cluster is bound by residues C88, C124, C157, C232, C236, and C239. Residues 218-475 (DSASKTAFIS…TTVFREEALK (258 aa)) form the Radical SAM core domain. The TRAM domain maps to 478–543 (QALIGSEQTV…SQTLKAQLIG (66 aa)).

The protein belongs to the methylthiotransferase family. MiaB subfamily. The cofactor is [4Fe-4S] cluster.

Functionally, potential regulator of CDK5 activity. This is CDK5RAP1-like protein from Caenorhabditis elegans.